A 91-amino-acid chain; its full sequence is Alpha-defensin-related sequence 12 (91 aa).

The N-terminal stretch at 1–19 (MKKLVLLSAFVLLAFQVQA) is a signal peptide. The propeptide occupies 20-65 (DSIQNTDEEIKTEEQPGEENQAVSISFGDPEGYALQDAAIRRARRC). Tandem repeats lie at residues 65–67 (CPP), 68–70 (CPS), 71–73 (CLS), 74–76 (CPW), 77–79 (CPR), and 83–85 (CPM). The interval 65–88 (CPPCPSCLSCPWCPRCLRCPMCKC) is 6 X 3 AA tandem repeats of C-P-X.

Belongs to the alpha-defensin family. As to expression, paneth cells of the small bowel.

It localises to the secreted. Apparent precursor of a secreted, cationic, proline- and cysteine-rich peptide that contains Cys-Pro-Xaa repeats. Unlike cryptdin, the proposed mature peptide region lacks the structural motif characteristic of defensins. It may have microbicidal activities. The sequence is that of Alpha-defensin-related sequence 12 (Defa-rs12) from Mus musculus (Mouse).